The sequence spans 393 residues: Ceramide synthase 4 (393 aa).

Residues 1–31 (MWSSLNDWLWNERLWLPANISWAQLEDHDGL) are Lumenal-facing. Asn19 is a glycosylation site (N-linked (GlcNAc...) asparagine). A helical membrane pass occupies residues 32–52 (VFPHPQDTLMAVPLALALVVV). Residues 67-128 (WLGVRNQIRR…RRRRNQDRPC (62 aa)) are homeobox-like. In terms of domain architecture, TLC spans 131–332 (KKFCESSWKF…ILCMIYSFIK (202 aa)). 4 helical membrane passes run 140 to 160 (FVFY…ESWL), 179 to 199 (LYHW…TLPF), 209 to 229 (QVIH…LNLL), and 260 to 280 (MCDT…LVLF). Positions 291-301 (ESIGNFSPFFG) match the Last loop motif motif. Residues 304–324 (FLNILLVILQLLHVFWSWLIL) traverse the membrane as a helical segment. Topologically, residues 325-393 (CMIYSFIKKG…RMVNRHTPAT (69 aa)) are cytoplasmic. Residues Ser342, Ser349, and Ser350 each carry the phosphoserine modification. Acidic residues predominate over residues 346–356 (ELDSSDGEAAE). The segment at 346–393 (ELDSSDGEAAEECPQMKNGAAQRPGAAPTDGPRSRAAGRMVNRHTPAT) is disordered.

Phosphorylated at the C-terminus by CK2.

It localises to the endoplasmic reticulum membrane. The enzyme catalyses sphinganine + octadecanoyl-CoA = N-(octadecanoyl)-sphinganine + CoA + H(+). It carries out the reaction eicosanoyl-CoA + sphinganine = N-eicosanoylsphinganine + CoA + H(+). The catalysed reaction is docosanoyl-CoA + sphinganine = N-docosanoylsphinganine + CoA + H(+). It catalyses the reaction tetracosanoyl-CoA + sphinganine = N-tetracosanoylsphinganine + CoA + H(+). The enzyme catalyses hexacosanoyl-CoA + sphinganine = N-hexacosanoylsphinganine + CoA + H(+). It carries out the reaction a fatty acyl-CoA + sphing-4-enine = an N-acylsphing-4-enine + CoA + H(+). The catalysed reaction is sphing-4-enine + octadecanoyl-CoA = N-octadecanoylsphing-4-enine + CoA + H(+). It catalyses the reaction hexadecasphinganine + octadecanoyl-CoA = N-octadecanoylhexadecasphinganine + CoA + H(+). Its pathway is lipid metabolism; sphingolipid metabolism. Its function is as follows. Ceramide synthase that catalyzes formation of ceramide from sphinganine and acyl-CoA substrates, with high selectivity toward long and very-long chains (C18:0-C22:0) as acyl donor. This Bos taurus (Bovine) protein is Ceramide synthase 4.